A 20-amino-acid polypeptide reads, in one-letter code: SHGKVETDEEFDARWVTYFS.

Belongs to the cytochrome c oxidase subunit 5A family. In terms of assembly, component of the cytochrome c oxidase (complex IV, CIV), a multisubunit enzyme composed of 14 subunits. The complex is composed of a catalytic core of 3 subunits MT-CO1, MT-CO2 and MT-CO3, encoded in the mitochondrial DNA, and 11 supernumerary subunits COX4I, COX5A, COX5B, COX6A, COX6B, COX6C, COX7A, COX7B, COX7C, COX8 and NDUFA4, which are encoded in the nuclear genome. The complex exists as a monomer or a dimer and forms supercomplexes (SCs) in the inner mitochondrial membrane with NADH-ubiquinone oxidoreductase (complex I, CI) and ubiquinol-cytochrome c oxidoreductase (cytochrome b-c1 complex, complex III, CIII), resulting in different assemblies (supercomplex SCI(1)III(2)IV(1) and megacomplex MCI(2)III(2)IV(2)). Interacts with AFG1L. Interacts with RAB5IF.

The protein localises to the mitochondrion inner membrane. Its pathway is energy metabolism; oxidative phosphorylation. Component of the cytochrome c oxidase, the last enzyme in the mitochondrial electron transport chain which drives oxidative phosphorylation. The respiratory chain contains 3 multisubunit complexes succinate dehydrogenase (complex II, CII), ubiquinol-cytochrome c oxidoreductase (cytochrome b-c1 complex, complex III, CIII) and cytochrome c oxidase (complex IV, CIV), that cooperate to transfer electrons derived from NADH and succinate to molecular oxygen, creating an electrochemical gradient over the inner membrane that drives transmembrane transport and the ATP synthase. Cytochrome c oxidase is the component of the respiratory chain that catalyzes the reduction of oxygen to water. Electrons originating from reduced cytochrome c in the intermembrane space (IMS) are transferred via the dinuclear copper A center (CU(A)) of subunit 2 and heme A of subunit 1 to the active site in subunit 1, a binuclear center (BNC) formed by heme A3 and copper B (CU(B)). The BNC reduces molecular oxygen to 2 water molecules using 4 electrons from cytochrome c in the IMS and 4 protons from the mitochondrial matrix. The chain is Cytochrome c oxidase subunit 5A-1, mitochondrial from Thunnus obesus (Bigeye tuna).